The following is a 445-amino-acid chain: GTPase Der (445 aa).

EngA-type G domains are found at residues 3 to 167 (PVIA…YAGQ) and 180 to 353 (IKIA…AAAM). GTP is bound by residues 9–16 (GRPNVGKS), 56–60 (DTGGF), 119–122 (NKAE), 186–193 (GRPNVGKS), 233–237 (DTAGL), and 298–301 (NKWD). A KH-like domain is found at 354 to 438 (AKLPTPKLTR…PLRIEFRSSN (85 aa)).

This sequence belongs to the TRAFAC class TrmE-Era-EngA-EngB-Septin-like GTPase superfamily. EngA (Der) GTPase family. Associates with the 50S ribosomal subunit.

Functionally, GTPase that plays an essential role in the late steps of ribosome biogenesis. In Burkholderia vietnamiensis (strain G4 / LMG 22486) (Burkholderia cepacia (strain R1808)), this protein is GTPase Der.